The sequence spans 247 residues: Cementoblastoma-derived protein 1 (247 aa).

The span at 1 to 28 shows a compositional bias: polar residues; it reads MGTSSTDSQQAGHRRCSTSNTSAENLTC. 2 disordered regions span residues 1 to 52 and 147 to 183; these read MGTS…AGQP and EENSGRARRVPPVPRTAPVSKGEGSHPPQNSNGEKVK.

Post-translationally, phosphorylated. In terms of processing, N-glycosylated. In terms of tissue distribution, expressed by cementoblasts, a subpopulation of periodontal ligament cells and cells located around vessels in periodontium (at protein level).

It localises to the cytoplasm. It is found in the nucleus. In terms of biological role, may play a role in development of the periodontium which surrounds and supports the teeth by promoting the differentiation of multi-potent cells from the periodontal ligament into cementoblasts to form the cementum. Binds hydroxyapatite and may promote the biomineralization of the cementum. Also promotes cell proliferation. This chain is Cementoblastoma-derived protein 1, found in Homo sapiens (Human).